The primary structure comprises 169 residues: NADH-quinone oxidoreductase subunit B (169 aa).

4 residues coordinate [4Fe-4S] cluster: Cys-42, Cys-43, Cys-107, and Cys-136.

This sequence belongs to the complex I 20 kDa subunit family. In terms of assembly, NDH-1 is composed of 14 different subunits. Subunits NuoB, C, D, E, F, and G constitute the peripheral sector of the complex. It depends on [4Fe-4S] cluster as a cofactor.

It is found in the cell inner membrane. It carries out the reaction a quinone + NADH + 5 H(+)(in) = a quinol + NAD(+) + 4 H(+)(out). NDH-1 shuttles electrons from NADH, via FMN and iron-sulfur (Fe-S) centers, to quinones in the respiratory chain. Couples the redox reaction to proton translocation (for every two electrons transferred, four hydrogen ions are translocated across the cytoplasmic membrane), and thus conserves the redox energy in a proton gradient. The protein is NADH-quinone oxidoreductase subunit B of Campylobacter hominis (strain ATCC BAA-381 / DSM 21671 / CCUG 45161 / LMG 19568 / NCTC 13146 / CH001A).